The sequence spans 144 residues: Globin-1 (144 aa).

The 141-residue stretch at 1–141 folds into the Globin domain; that stretch reads VSANDIKNVQ…ILHQMSSYFA (141 aa). Residue His89 participates in heme b binding.

The protein belongs to the globin family. As to quaternary structure, homodimer.

This is Globin-1 from Phreagena soyoae (Deep-sea cold-seep clam).